Here is a 67-residue protein sequence, read N- to C-terminus: MVAFLELTSDVSQPFVIPSLSPVSQPSSRKNSDANVDDLNLAIANAALLDASASSRSHSRKNSLSLL.

Residues S24 and S32 each carry the phosphoserine modification.

In terms of processing, phosphorylated during meiosis. During meiosis, exists in both unphosphorylated and phosphorylated forms with the highest degree of phosphorylation occurring in mid-meiosis.

It localises to the prospore membrane. Required for efficient sporulation. This Saccharomyces cerevisiae (strain ATCC 204508 / S288c) (Baker's yeast) protein is Sporulation protein 24.